Reading from the N-terminus, the 257-residue chain is Imidazole glycerol phosphate synthase subunit HisF (257 aa).

Active-site residues include D11 and D130.

It belongs to the HisA/HisF family. In terms of assembly, heterodimer of HisH and HisF.

It is found in the cytoplasm. It catalyses the reaction 5-[(5-phospho-1-deoxy-D-ribulos-1-ylimino)methylamino]-1-(5-phospho-beta-D-ribosyl)imidazole-4-carboxamide + L-glutamine = D-erythro-1-(imidazol-4-yl)glycerol 3-phosphate + 5-amino-1-(5-phospho-beta-D-ribosyl)imidazole-4-carboxamide + L-glutamate + H(+). It functions in the pathway amino-acid biosynthesis; L-histidine biosynthesis; L-histidine from 5-phospho-alpha-D-ribose 1-diphosphate: step 5/9. Its function is as follows. IGPS catalyzes the conversion of PRFAR and glutamine to IGP, AICAR and glutamate. The HisF subunit catalyzes the cyclization activity that produces IGP and AICAR from PRFAR using the ammonia provided by the HisH subunit. The polypeptide is Imidazole glycerol phosphate synthase subunit HisF (Shewanella sp. (strain ANA-3)).